A 496-amino-acid chain; its full sequence is Putative BTB/POZ domain and WD-repeat protein R61 (496 aa).

Residues 8 to 78 form the BTB domain; the sequence is SNINLILNDE…MFSDIDIYKN (71 aa). WD repeat units lie at residues 149–189, 208–248, 250–285, 291–330, 333–371, and 422–464; these read KFPR…FNSK, IFDN…KEFQ, DYKINDICFSPDGKSCVCANKFLSIYDLDNGRRKVL, KSIGCIKTCVCWTSDNIIACGDSDGVIEFWNAETNLIIKW, VSKSRISNISFSPDRSQIAVSNQTKIILYDSIFDKKILE, and MYFS…DIIY.

Belongs to the mimivirus BTB/WD family.

The protein is Putative BTB/POZ domain and WD-repeat protein R61 of Acanthamoeba polyphaga (Amoeba).